We begin with the raw amino-acid sequence, 181 residues long: Oligoribonuclease (181 aa).

In terms of domain architecture, Exonuclease spans 8–171 (LIWIDLEMTG…QDIQESIAEL (164 aa)). Tyr-129 is a catalytic residue.

It belongs to the oligoribonuclease family.

The protein resides in the cytoplasm. Functionally, 3'-to-5' exoribonuclease specific for small oligoribonucleotides. This is Oligoribonuclease from Shewanella putrefaciens (strain CN-32 / ATCC BAA-453).